Here is a 301-residue protein sequence, read N- to C-terminus: 3-dehydroquinate dehydratase (301 aa).

The 3-dehydroquinate dehydratase stretch occupies residues 1–221 (MLQYGVLICG…YYAALLALGI (221 aa)). 3-dehydroquinate-binding positions include 32–34 (ELR) and Arg-63. His-119 functions as the Proton donor/acceptor in the catalytic mechanism. Lys-145 functions as the Schiff-base intermediate with substrate in the catalytic mechanism. 3 residues coordinate 3-dehydroquinate: Arg-183, Thr-202, and Gln-206. The Chorismate mutase domain maps to 222-301 (TPSGGGLPAL…QMCKAVQLVA (80 aa)).

It belongs to the type-I 3-dehydroquinase family. As to quaternary structure, homodimer.

It carries out the reaction 3-dehydroquinate = 3-dehydroshikimate + H2O. It functions in the pathway metabolic intermediate biosynthesis; chorismate biosynthesis; chorismate from D-erythrose 4-phosphate and phosphoenolpyruvate: step 3/7. In terms of biological role, involved in the third step of the chorismate pathway, which leads to the biosynthesis of aromatic amino acids. Catalyzes the cis-dehydration of 3-dehydroquinate (DHQ) and introduces the first double bond of the aromatic ring to yield 3-dehydroshikimate. This is 3-dehydroquinate dehydratase from Pyrobaculum aerophilum (strain ATCC 51768 / DSM 7523 / JCM 9630 / CIP 104966 / NBRC 100827 / IM2).